The following is a 429-amino-acid chain: Histidine--tRNA ligase (429 aa).

This sequence belongs to the class-II aminoacyl-tRNA synthetase family. Homodimer.

Its subcellular location is the cytoplasm. The catalysed reaction is tRNA(His) + L-histidine + ATP = L-histidyl-tRNA(His) + AMP + diphosphate + H(+). The chain is Histidine--tRNA ligase from Pseudomonas aeruginosa (strain UCBPP-PA14).